The following is a 272-amino-acid chain: Zinc finger protein 32 (272 aa).

The segment covering 50-65 (RREKLEQKSPESKALQ) has biased composition (basic and acidic residues). Residues 50 to 69 (RREKLEQKSPESKALQEDSP) are disordered. 3 consecutive C2H2-type zinc fingers follow at residues 76–98 (YDCQ…ERIH), 104–126 (FECT…QRIH), and 132–154 (YQCK…ERLH). Residues cysteine 78, cysteine 81, histidine 94, histidine 98, cysteine 106, cysteine 109, histidine 122, histidine 126, serine 140, glutamine 143, glycine 156, tyrosine 160, phenylalanine 197, lysine 200, leucine 213, alanine 217, cysteine 246, cysteine 249, histidine 262, and cysteine 266 each coordinate Zn(2+). 2 consecutive C2H2-type zinc fingers follow at residues 160–182 (YECA…RRVH) and 188–210 (YRCD…IRVH). Residues 216–238 (YACSHCRKSFHTRGNCLLHGKVH) form a C2H2-type 6 zinc finger. A CCHC-type zinc finger spans residues 244-266 (YLCGQCGKSFTQRGSLAVHQRSC).

This sequence belongs to the krueppel C2H2-type zinc-finger protein family.

It is found in the nucleus. May be involved in transcriptional regulation. The chain is Zinc finger protein 32 (Znf32) from Mus musculus (Mouse).